We begin with the raw amino-acid sequence, 148 residues long: Single-stranded DNA-binding protein, mitochondrial (148 aa).

The transit peptide at 1-16 directs the protein to the mitochondrion; sequence MFRRPVLQVLRQFVRH. Residues 30–141 enclose the SSB domain; it reads LNRVHLLGRV…IIADNIIFLS (112 aa). 2 positions are modified to phosphoserine: Ser67 and Ser79. Lys113 carries the post-translational modification N6-acetyllysine. Residue Lys122 is modified to N6-succinyllysine.

Homotetramer. Interacts with MPG/AAG, through inhibition of its glycosylase activity it potentially prevents formation of DNA breaks in ssDNA, ensuring that base removal primarily occurs in dsDNA. Interacts with POLDIP2. Interacts with PRIMPOL.

The protein resides in the mitochondrion. The protein localises to the mitochondrion matrix. It localises to the mitochondrion nucleoid. In terms of biological role, binds preferentially and cooperatively to pyrimidine rich single-stranded DNA (ss-DNA). In vitro, required to maintain the copy number of mitochondrial DNA (mtDNA) and plays a crucial role during mtDNA replication by stimulating the activity of the replisome components POLG and TWNK at the replication fork. Promotes the activity of the gamma complex polymerase POLG, largely by organizing the template DNA and eliminating secondary structures to favor ss-DNA conformations that facilitate POLG activity. In addition it is able to promote the 5'-3' unwinding activity of the mtDNA helicase TWNK. May also function in mtDNA repair. The protein is Single-stranded DNA-binding protein, mitochondrial (SSBP1) of Pongo abelii (Sumatran orangutan).